We begin with the raw amino-acid sequence, 104 residues long: DNA-directed RNA polymerase subunit Rpo13 (104 aa).

2 disordered regions span residues 1–33 (MVSGMSTDEEKEGTSDEEVNEEKEVEETSEDEF) and 78–104 (RDSRRKAKKAVSKKVKKTKKKEKSVEG). The span at 7-31 (TDEEKEGTSDEEVNEEKEVEETSED) shows a compositional bias: acidic residues. Residues 80-104 (SRRKAKKAVSKKVKKTKKKEKSVEG) are compositionally biased toward basic residues.

It belongs to the archaeal Rpo13 RNA polymerase subunit family. Part of the 13-subunit RNA polymerase complex.

The protein resides in the cytoplasm. The catalysed reaction is RNA(n) + a ribonucleoside 5'-triphosphate = RNA(n+1) + diphosphate. Functionally, DNA-dependent RNA polymerase (RNAP) catalyzes the transcription of DNA into RNA using the four ribonucleoside triphosphates as substrates. Probably binds dsDNA. This Saccharolobus solfataricus (strain ATCC 35092 / DSM 1617 / JCM 11322 / P2) (Sulfolobus solfataricus) protein is DNA-directed RNA polymerase subunit Rpo13.